A 661-amino-acid polypeptide reads, in one-letter code: Heme transporter BhuA (661 aa).

The signal sequence occupies residues 1 to 23 (MKFTRTLVLASTSLLATVATSQA). Residues 48–159 (KDNIEATGGT…AAGAIRYETV (112 aa)) form the TBDR plug domain. The 492-residue stretch at 170 to 661 (TFGARIIGSY…TFTFQTAFKF (492 aa)) folds into the TBDR beta-barrel domain.

It belongs to the TonB-dependent receptor family.

Its subcellular location is the cell outer membrane. In terms of biological role, heme transporter. This Brucella ovis (strain ATCC 25840 / 63/290 / NCTC 10512) protein is Heme transporter BhuA (bhuA).